The sequence spans 131 residues: Methylglyoxal synthase (131 aa).

An MGS-like domain is found at 1–131 (MKIALIAHDK…GDLDYRKLRK (131 aa)). Substrate is bound by residues H8, K12, 34 to 37 (TGTT), and 54 to 55 (SG). D60 acts as the Proton donor/acceptor in catalysis. Substrate is bound at residue H87.

It belongs to the methylglyoxal synthase family.

The enzyme catalyses dihydroxyacetone phosphate = methylglyoxal + phosphate. In terms of biological role, catalyzes the formation of methylglyoxal from dihydroxyacetone phosphate. The protein is Methylglyoxal synthase of Bacillus cereus (strain ATCC 10987 / NRS 248).